The primary structure comprises 223 residues: Phosphoribosylformylglycinamidine synthase subunit PurQ (223 aa).

The Glutamine amidotransferase type-1 domain maps to 4 to 223; the sequence is FAVVVFPGTN…FRSMVEWARK (220 aa). Cysteine 85 serves as the catalytic Nucleophile. Residues histidine 196 and glutamate 198 contribute to the active site.

In terms of assembly, part of the FGAM synthase complex composed of 1 PurL, 1 PurQ and 2 PurS subunits.

Its subcellular location is the cytoplasm. It catalyses the reaction N(2)-formyl-N(1)-(5-phospho-beta-D-ribosyl)glycinamide + L-glutamine + ATP + H2O = 2-formamido-N(1)-(5-O-phospho-beta-D-ribosyl)acetamidine + L-glutamate + ADP + phosphate + H(+). It carries out the reaction L-glutamine + H2O = L-glutamate + NH4(+). It functions in the pathway purine metabolism; IMP biosynthesis via de novo pathway; 5-amino-1-(5-phospho-D-ribosyl)imidazole from N(2)-formyl-N(1)-(5-phospho-D-ribosyl)glycinamide: step 1/2. Functionally, part of the phosphoribosylformylglycinamidine synthase complex involved in the purines biosynthetic pathway. Catalyzes the ATP-dependent conversion of formylglycinamide ribonucleotide (FGAR) and glutamine to yield formylglycinamidine ribonucleotide (FGAM) and glutamate. The FGAM synthase complex is composed of three subunits. PurQ produces an ammonia molecule by converting glutamine to glutamate. PurL transfers the ammonia molecule to FGAR to form FGAM in an ATP-dependent manner. PurS interacts with PurQ and PurL and is thought to assist in the transfer of the ammonia molecule from PurQ to PurL. In Thermococcus kodakarensis (strain ATCC BAA-918 / JCM 12380 / KOD1) (Pyrococcus kodakaraensis (strain KOD1)), this protein is Phosphoribosylformylglycinamidine synthase subunit PurQ.